A 343-amino-acid polypeptide reads, in one-letter code: Heat-inducible transcription repressor HrcA (343 aa).

This sequence belongs to the HrcA family.

In terms of biological role, negative regulator of class I heat shock genes (grpE-dnaK-dnaJ and groELS operons). Prevents heat-shock induction of these operons. This Thermoanaerobacter pseudethanolicus (strain ATCC 33223 / 39E) (Clostridium thermohydrosulfuricum) protein is Heat-inducible transcription repressor HrcA.